The primary structure comprises 860 residues: Tetratricopeptide repeat protein 13 (860 aa).

TPR repeat units follow at residues 143-176 (TNEELAIAYVLIGSGLYDEAIRHFSTMLQEEPDL), 216-248 (PEVFEQRAEILSPLGRINEAVNDLTKAIQLQPS), 249-282 (ARLYRHRGTLYFISEDYATAHEDFQQSLELNKNQ), 284-316 (IAMLYKGLTFFHRGLLKEAIESFKEALKQKVDF), 317-350 (IDAYKSLGQAYRELGNFEAATESFQKALLLNQNH), 352-384 (QTLQLRGMMLYHHGSLQEALKNFKRCLQLEPYN), and 386-418 (VCQYMKGLSHVAMGQFYEGIKAQTKVMLNDPLP).

In Homo sapiens (Human), this protein is Tetratricopeptide repeat protein 13 (TTC13).